The sequence spans 107 residues: Phosphoribosyl-ATP pyrophosphatase (107 aa).

This sequence belongs to the PRA-PH family.

The protein resides in the cytoplasm. It carries out the reaction 1-(5-phospho-beta-D-ribosyl)-ATP + H2O = 1-(5-phospho-beta-D-ribosyl)-5'-AMP + diphosphate + H(+). Its pathway is amino-acid biosynthesis; L-histidine biosynthesis; L-histidine from 5-phospho-alpha-D-ribose 1-diphosphate: step 2/9. This Methylobacterium nodulans (strain LMG 21967 / CNCM I-2342 / ORS 2060) protein is Phosphoribosyl-ATP pyrophosphatase.